A 2179-amino-acid chain; its full sequence is FRAS1-related extracellular matrix protein 1 (2179 aa).

Positions 1 to 21 (MNSLSWGAANAVLLLLLLAWA) are cleaved as a signal peptide. Positions 199–201 (RGD) match the Cell attachment site motif. CSPG repeat units follow at residues 296 to 390 (KAAF…LEVY), 413 to 500 (APRV…FRIF), and 521 to 615 (PPFL…FVLW). N-linked (GlcNAc...) asparagine glycosylation is present at N335. N-linked (GlcNAc...) asparagine glycans are attached at residues N560 and N622. CSPG repeat units follow at residues 642-754 (KEAP…FSVS), 776-867 (QVPE…LEVT), and 887-982 (EPPV…LVVS). N1014 is a glycosylation site (N-linked (GlcNAc...) asparagine). 6 CSPG repeats span residues 1024 to 1126 (PPSI…VYVT), 1147 to 1254 (EAPD…IQLS), 1275 to 1372 (KPML…FYLW), 1393 to 1485 (GDIV…FIIS), 1506 to 1596 (LPVV…FMAT), and 1628 to 1724 (PRIT…FQIM). The N-linked (GlcNAc...) asparagine glycan is linked to N1566. One can recognise a Calx-beta domain in the interval 1731–1830 (ATPQILELKW…DDEVFEVILN (100 aa)). Positions 1907-1909 (RGD) match the Cell attachment site motif. The region spanning 2060–2174 (HSGYCHILIT…CRRAKPHNYV (115 aa)) is the C-type lectin domain. C2151 and C2165 are joined by a disulfide.

This sequence belongs to the FRAS1 family. Interacts with FREM2.

The protein localises to the secreted. The protein resides in the extracellular space. It is found in the extracellular matrix. Its subcellular location is the basement membrane. Extracellular matrix protein that plays a role in epidermal differentiation and is required for epidermal adhesion during embryonic development. This Homo sapiens (Human) protein is FRAS1-related extracellular matrix protein 1.